We begin with the raw amino-acid sequence, 405 residues long: Ubiquitin-like modifier-activating enzyme 5 (405 aa).

The tract at residues 1 to 44 (MATVEELQTRVKQLEEELERERTRNRGGTDGGGGRKKIDQMSSE) is disordered. Residues 7-24 (LQTRVKQLEEELERERTR) show a composition bias toward basic and acidic residues. The ATP site is built by Gly-81, Asp-102, Lys-125, Asn-148, and Asn-182. Zn(2+) is bound by residues Cys-224 and Cys-227. The active-site Glycyl thioester intermediate is the Cys-248. Zn(2+) contacts are provided by Cys-301 and Cys-306. Residues 346–377 (AETTEEELKAASHGHVPELVEGVHVAYVRPMT) are linker. A UFC1-binding sequence (UFC) motif is present at residues 390 to 405 (DDQESLEDLMAKMKSI).

This sequence belongs to the ubiquitin-activating E1 family. UBA5 subfamily. Homodimer; homodimerization is required for UFM1 activation. Interacts (via UIS motif) with UFM1; binds UFM1 via a trans-binding mechanism in which UFM1 interacts with distinct sites in both subunits of the UBA5 homodimer. Interacts (via C-terminus) with UFC1.

The protein localises to the cytoplasm. It is found in the nucleus. The protein resides in the endoplasmic reticulum membrane. Its subcellular location is the golgi apparatus. Its function is as follows. E1-like enzyme which specifically catalyzes the first step in ufmylation. Activates UFM1 by first adenylating its C-terminal glycine residue with ATP, and thereafter linking this residue to the side chain of a cysteine residue in E1, yielding a UFM1-E1 thioester and free AMP. Activates UFM1 via a trans-binding mechanism, in which UFM1 interacts with distinct sites in both subunits of the UBA5 homodimer. Trans-binding also promotes stabilization of the UBA5 homodimer, and enhances ATP-binding. Transfer of UFM1 from UBA5 to the E2-like enzyme UFC1 also takes place using a trans mechanism. This is Ubiquitin-like modifier-activating enzyme 5 from Branchiostoma floridae (Florida lancelet).